An 815-amino-acid polypeptide reads, in one-letter code: Cell division control protein 48 homolog D (815 aa).

A2 carries the post-translational modification N-acetylalanine. Phosphoserine is present on S42. ATP is bound by residues 249-256 (GPPGSGKT) and 522-529 (GPPGCGKT). S720 carries the post-translational modification Phosphoserine. The interval 772–815 (GSEFRFPDAPTGTTGAFPGAAATVGGVDPFATSGGAADDDDLYS) is disordered. Positions 780 to 798 (APTGTTGAFPGAAATVGGV) are enriched in low complexity.

It belongs to the AAA ATPase family.

The protein localises to the nucleus. Its subcellular location is the cytoplasm. The protein resides in the cytoskeleton. It is found in the phragmoplast. Probably functions in cell division and growth processes. Interacts with certain SNAREs as part of specialized membrane fusion events where vesicles from the same organelle fuse (homotypic fusion). The polypeptide is Cell division control protein 48 homolog D (CDC48D) (Arabidopsis thaliana (Mouse-ear cress)).